The chain runs to 117 residues: Appetite-regulating hormone (117 aa).

The first 23 residues, 1 to 23 (MPSPGTVCSLLLLGMLWLDLAMA), serve as a signal peptide directing secretion. S26 carries the O-decanoyl serine; alternate lipid modification. S26 carries O-hexanoyl serine; alternate lipidation. A lipid anchor (O-octanoyl serine; alternate) is attached at S26. The segment at 29–50 (SPEHQRVQQRKESKKPPAKLQP) is disordered. Residues 31–43 (EHQRVQQRKESKK) show a composition bias toward basic and acidic residues. A propeptide spans 52–75 (ALAGWLRPEDGGQAEGAEDELEVR) (removed in mature form). Position 98 is a leucine amide (L98). The propeptide at 99–117 (GKFLQDILWEEAKEAPADK) is removed in mature form.

It belongs to the motilin family. Post-translationally, O-octanoylated by GOAT/MBOAT4. O-octanoylation or O-decanoylation is essential for ghrelin activity. The O-decanoylated forms Ghrelin-27-C10 and Ghrelin-28-C10 differ in the length of the carbon backbone of the carboxylic acid bound to Ser-26. A small fraction of ghrelin, ghrelin-28-C10:1, may be modified with a singly unsaturated carboxylic acid. Also O-acetylated and O-butyrylated on Ser-26 to minor levels. In terms of processing, amidation of Leu-98 is essential for obestatin activity. Highest level in stomach. All forms are found in serum as well. Other tissues compensate for the loss of ghrelin synthesis in the stomach following gastrectomy.

It localises to the secreted. In terms of biological role, ghrelin is the ligand for growth hormone secretagogue receptor type 1 (GHSR). Induces the release of growth hormone from the pituitary. Has an appetite-stimulating effect, induces adiposity and stimulates gastric acid secretion. Involved in growth regulation. Its function is as follows. May be the ligand for GPR39. May have an appetite-reducing effect resulting in decreased food intake. May reduce gastric emptying activity and jejunal motility. The protein is Appetite-regulating hormone (GHRL) of Homo sapiens (Human).